Reading from the N-terminus, the 294-residue chain is Nucleotide-binding protein Dtur_1129 (294 aa).

Position 10–17 (10–17 (GLSGAGKS)) interacts with ATP. Residue 61-64 (DIRT) coordinates GTP.

It belongs to the RapZ-like family.

Displays ATPase and GTPase activities. This Dictyoglomus turgidum (strain DSM 6724 / Z-1310) protein is Nucleotide-binding protein Dtur_1129.